The chain runs to 306 residues: N-acetylmuramic acid 6-phosphate etherase (306 aa).

The region spanning 60–223 (TAAALRGGGR…STGAMVRLGK (164 aa)) is the SIS domain. The Proton donor role is filled by Glu88. Residue Glu119 is part of the active site.

This sequence belongs to the GCKR-like family. MurNAc-6-P etherase subfamily. In terms of assembly, homodimer.

The catalysed reaction is N-acetyl-D-muramate 6-phosphate + H2O = N-acetyl-D-glucosamine 6-phosphate + (R)-lactate. Its pathway is amino-sugar metabolism; N-acetylmuramate degradation. In terms of biological role, specifically catalyzes the cleavage of the D-lactyl ether substituent of MurNAc 6-phosphate, producing GlcNAc 6-phosphate and D-lactate. This is N-acetylmuramic acid 6-phosphate etherase from Gloeobacter violaceus (strain ATCC 29082 / PCC 7421).